Consider the following 307-residue polypeptide: D-alanine--D-alanine ligase (307 aa).

The ATP-grasp domain maps to 101–301; it reads KDVLRAAGVP…FGELVRWMVE (201 aa). Residue 128-182 coordinates ATP; that stretch reads MTPPYVVKPLGEGSSFGVIIVRADQTHPPQELTRDDWAYGDLVLVERFVAGRELT. Residues Asp-251, Glu-268, and Asn-270 each contribute to the Mg(2+) site.

It belongs to the D-alanine--D-alanine ligase family. Mg(2+) serves as cofactor. Requires Mn(2+) as cofactor.

It is found in the cytoplasm. The catalysed reaction is 2 D-alanine + ATP = D-alanyl-D-alanine + ADP + phosphate + H(+). It participates in cell wall biogenesis; peptidoglycan biosynthesis. Cell wall formation. This chain is D-alanine--D-alanine ligase, found in Methylocella silvestris (strain DSM 15510 / CIP 108128 / LMG 27833 / NCIMB 13906 / BL2).